A 176-amino-acid chain; its full sequence is N,N-dimethyl phenylurea N-demethylase subunit beta (176 aa).

This sequence belongs to the bacterial ring-hydroxylating dioxygenase beta subunit family. As to quaternary structure, pdmA (subunit alpha) and PdmB (subunit beta) form the oxygenase component of a bacterial Rieske non-heme iron oxygenase (RO) system.

It carries out the reaction a 1,1-dimethyl-3-phenylurea + 2 reduced [2Fe-2S]-[ferredoxin] + O2 + 2 H(+) = a 1-methyl-3-phenylurea + formaldehyde + 2 oxidized [2Fe-2S]-[ferredoxin] + H2O. The enzyme catalyses isoproturon + 2 reduced [2Fe-2S]-[ferredoxin] + O2 + 2 H(+) = 1-methyl-3-[4-(propan-2-yl)phenyl]urea + formaldehyde + 2 oxidized [2Fe-2S]-[ferredoxin] + H2O. The catalysed reaction is chlorotoluron + 2 reduced [2Fe-2S]-[ferredoxin] + O2 + 2 H(+) = 3-(3-chloro-4-methylphenyl)-1-methylurea + formaldehyde + 2 oxidized [2Fe-2S]-[ferredoxin] + H2O. It catalyses the reaction metoxuron + 2 reduced [2Fe-2S]-[ferredoxin] + O2 + 2 H(+) = 3-(3-chloro-4-methoxylphenyl)-1-methylurea + formaldehyde + 2 oxidized [2Fe-2S]-[ferredoxin] + H2O. It carries out the reaction monuron + 2 reduced [2Fe-2S]-[ferredoxin] + O2 + 2 H(+) = 3-(4-chlorophenyl)-1-methylurea + formaldehyde + 2 oxidized [2Fe-2S]-[ferredoxin] + H2O. The enzyme catalyses diuron + 2 reduced [2Fe-2S]-[ferredoxin] + O2 + 2 H(+) = 3-(3,4-dichlorophenyl)-1-methylurea + formaldehyde + 2 oxidized [2Fe-2S]-[ferredoxin] + H2O. The catalysed reaction is fluometuron + 2 reduced [2Fe-2S]-[ferredoxin] + O2 + 2 H(+) = 3-[3-(trifluoromethyl)phenyl]-1-methylurea + formaldehyde + 2 oxidized [2Fe-2S]-[ferredoxin] + H2O. It catalyses the reaction fenuron + 2 reduced [2Fe-2S]-[ferredoxin] + O2 + 2 H(+) = 1-methyl-3-phenylurea + formaldehyde + 2 oxidized [2Fe-2S]-[ferredoxin] + H2O. Its pathway is xenobiotic degradation. Activity is stimulated in vitro by coexpression of a [3Fe-4S]-type ferredoxin. Its function is as follows. Part of the multicomponent N,N-dimethyl phenylurea N-demethylase responsible for the initial N-demethylation step during the bacterial metabolism of N,N-dimethyl-substituted phenylurea herbicides. Catalyzes the mono-N-demethylation of N,N-dimethyl-substituted phenylurea herbicides to their mono-N-demethylated derivatives. Is active on isoproturon (IPU), chlorotoluron, metoxuron, monoron, diuron, fluometuron and fenuron, but cannot transform the N-methoxy-N-methyl-substituted herbicides. The protein is N,N-dimethyl phenylurea N-demethylase subunit beta of Sphingobium sp. (strain YBL2).